Reading from the N-terminus, the 786-residue chain is Cadherin-9 (786 aa).

Residues 1 to 21 (MRTYSCLQLVIWTCIFHMVDN) form the signal peptide. An N-linked (GlcNAc...) asparagine glycan is attached at N21. Positions 22–52 (STLQGKDSSHFLRRIVNLKKDEGKMLHRAKR) are excised as a propeptide. Residues 22–614 (STLQGKDSSH…MLAAGLSTGA (593 aa)) are Extracellular-facing. 5 consecutive Cadherin domains span residues 54 to 158 (WMWN…EPKF), 159 to 267 (TKDL…PPRF), 268 to 382 (PQST…PPVF), 383 to 487 (SKLS…APEF), and 487 to 604 (FATY…AEAL). An N-linked (GlcNAc...) asparagine glycan is attached at N254. N454 and N535 each carry an N-linked (GlcNAc...) asparagine glycan. Residues 615–635 (LIAILLCVVILLTLIVLFAAL) traverse the membrane as a helical segment. The Cytoplasmic segment spans residues 636-786 (KRQRKKEPLI…AEMYGGNDSD (151 aa)). S785 carries the post-translational modification Phosphoserine.

Its subcellular location is the cell membrane. Cadherins are calcium-dependent cell adhesion proteins. They preferentially interact with themselves in a homophilic manner in connecting cells; cadherins may thus contribute to the sorting of heterogeneous cell types. This chain is Cadherin-9 (Cdh9), found in Mus musculus (Mouse).